The following is a 231-amino-acid chain: Probable septum site-determining protein MinC (231 aa).

Residues 100–125 form a disordered region; it reads EGKEKSPRPAPAPQAPAQNTTPVTKT.

The protein belongs to the MinC family. As to quaternary structure, interacts with MinD and FtsZ.

Functionally, cell division inhibitor that blocks the formation of polar Z ring septums. Rapidly oscillates between the poles of the cell to destabilize FtsZ filaments that have formed before they mature into polar Z rings. Prevents FtsZ polymerization. This Escherichia coli O81 (strain ED1a) protein is Probable septum site-determining protein MinC.